We begin with the raw amino-acid sequence, 384 residues long: Guanine nucleotide-binding protein alpha-1 subunit (384 aa).

A lipid anchor (N-myristoyl glycine) is attached at Gly2. Cys5 carries S-palmitoyl cysteine lipidation. The G-alpha domain occupies 38–384 (HIRKLLLLGA…RRNLFEAGLL (347 aa)). Residues 41-54 (KLLLLGAGESGKST) are G1 motif. Residues Glu49, Ser50, Gly51, Lys52, Ser53, Thr54, Asp163, Leu188, Thr194, Gly222, Asn288, Lys289, Asp291, and Ala356 each coordinate GTP. Ser53 contacts Mg(2+). The segment at 186 to 194 (DVLLARVRT) is G2 motif. Residue Thr194 coordinates Mg(2+). A G3 motif region spans residues 215 to 224 (YRLFDVGGQR). The interval 284 to 291 (MLFLNKFD) is G4 motif. The tract at residues 354-359 (TTALDQ) is G5 motif.

Belongs to the G-alpha family. In terms of assembly, g proteins are composed of 3 units; alpha, beta and gamma. The alpha chain contains the guanine nucleotide binding site. Mg(2+) serves as cofactor.

In terms of biological role, guanine nucleotide-binding proteins (G proteins) are involved as modulators or transducers in various transmembrane signaling systems. This chain is Guanine nucleotide-binding protein alpha-1 subunit (GPA1), found in Pisum sativum (Garden pea).